Reading from the N-terminus, the 237-residue chain is Class B acid phosphatase (237 aa).

An N-terminal signal peptide occupies residues 1-23 (MKKITLALSAVCLLFTLNHSANA). Catalysis depends on Asp69, which acts as the Nucleophile. Asp69 and Asp71 together coordinate Mg(2+). Asp71 acts as the Proton donor in catalysis. Substrate contacts are provided by residues 137–138 (TG) and Lys177. Asp192 contacts Mg(2+).

The protein belongs to the class B bacterial acid phosphatase family. In terms of assembly, homotetramer. Mg(2+) is required as a cofactor.

The protein resides in the periplasm. It catalyses the reaction a phosphate monoester + H2O = an alcohol + phosphate. With respect to regulation, nucleosides, and particularly 2'-deoxyribonucleosides, are potent inhibitors of the phosphatase activity. The phosphatase activity is also inhibited by inorganic phosphate and EDTA in vitro. Its function is as follows. Dephosphorylates several organic phosphate monoesters such as 3'-UMP, 5'-UMP and pNPP. Also has a phosphotransferase activity catalyzing the transfer of low-energy phosphate groups from organic phosphate monoesters to free hydroxyl groups of various organic compounds such as the 2'-, 3-, or 5'-hydroxyls of nucleosides and nucleotides. Also displays significant phosphomutase activity since it is able to catalyze the transfer of the phosphate group of 3'-AMP from the 3'-position both to the 2'- and 5'-positions. One of the physiological functions of the phosphohydrolytic activity of the enzyme is believed to be the scavenging of organic phosphate esters that otherwise cannot pass the cytoplasmic membrane. This chain is Class B acid phosphatase (aphA), found in Salmonella typhimurium (strain LT2 / SGSC1412 / ATCC 700720).